A 509-amino-acid chain; its full sequence is Probable triacylglyceride transporter ML0556 (509 aa).

The next 13 membrane-spanning stretches (helical) occupy residues 48-68, 78-98, 112-132, 146-166, 171-191, 203-223, 232-252, 272-292, 309-329, 339-359, 381-403, 410-430, and 477-497; these read RITWIVTMYLLGYIAAMPLLS, LLLQVSLAGFAIGSVMTALAG, IQGVASGALLPITLALGADLW, AAQELGSVLGPLYGIFIVWLF, YVFWINIPLTAIAMLMIQVSL, VDVVGGVLLAIALGLVVIGLY, VLPSYGVPVLVGGIVATVAFA, PFLSALGASVAAGAALMVTLV, AAGLLVWFLIALPIGAVLGGW, MTFVGLLITAGGYWLISHWPV, LLVAGLGLGLVIGPLSSATLRVV, IASAAVVVARMTGMLIGVAAL, and IFMITAIVCVIGALLGLLISS.

Belongs to the major facilitator superfamily.

Its subcellular location is the cell inner membrane. In terms of biological role, in association with lipoprotein LprG probably transports triacylglycerides (TAG) across the inner cell membrane into the periplasm; TAG probably regulates lipid metabolism and growth regulation. May be an efflux transporter and involved in maintaining correct cell wall permeability. Probably required with LprG for normal surface localization of lipoarabinomannan (LAM). This Mycobacterium leprae (strain TN) protein is Probable triacylglyceride transporter ML0556.